We begin with the raw amino-acid sequence, 567 residues long: Malate synthase, glyoxysomal (567 aa).

The Proton acceptor role is filled by Arg-182. Asp-468 acts as the Proton donor in catalysis. A Microbody targeting signal motif is present at residues 565–567; sequence SRL.

It belongs to the malate synthase family.

The protein resides in the glyoxysome. The catalysed reaction is glyoxylate + acetyl-CoA + H2O = (S)-malate + CoA + H(+). It participates in carbohydrate metabolism; glyoxylate cycle; (S)-malate from isocitrate: step 2/2. The sequence is that of Malate synthase, glyoxysomal from Ricinus communis (Castor bean).